A 246-amino-acid chain; its full sequence is MQPPGPPPAYAPANGDFTFVSSADAEDLSGSIAAPDVKLNLGVSGDFIKESTATTFLRQRGYGWLLEVEDEDPEDNKPLLEELDIDLKDIYYKIRCVLMPMPSLGFNRQVVRDNPDFWGPLAVVLFFSMISLYGQFRVVSWIITIWIFGSLTIFLLARVLGGEVAYGQVLGVIGYSLLPLIVIAPILLVVGSFEMVSTLIKLFGVFWAAYSAASLLVGEEFKTKKPLLIYPIFLLYIYFLSLYTGV.

The Cytoplasmic segment spans residues 1–115; it reads MQPPGPPPAY…FNRQVVRDNP (115 aa). Residues 116-136 traverse the membrane as a helical segment; the sequence is DFWGPLAVVLFFSMISLYGQF. The Lumenal portion of the chain corresponds to 137–140; the sequence is RVVS. Residues 141 to 161 form a helical membrane-spanning segment; sequence WIITIWIFGSLTIFLLARVLG. The Cytoplasmic portion of the chain corresponds to 162-168; the sequence is GEVAYGQ. The helical transmembrane segment at 169–189 threads the bilayer; that stretch reads VLGVIGYSLLPLIVIAPILLV. At 190–197 the chain is on the lumenal side; it reads VGSFEMVS. The chain crosses the membrane as a helical span at residues 198-218; it reads TLIKLFGVFWAAYSAASLLVG. Over 219–225 the chain is Cytoplasmic; sequence EEFKTKK. Residues 226–246 form a helical membrane-spanning segment; the sequence is PLLIYPIFLLYIYFLSLYTGV.

Belongs to the YIP1 family. In terms of assembly, interacts with YIPF3 and YIPF5.

The protein localises to the golgi apparatus. Its subcellular location is the cis-Golgi network membrane. Functionally, involved in the maintenance of the Golgi structure. The sequence is that of Protein YIPF4 (Yipf4) from Mus musculus (Mouse).